The primary structure comprises 380 residues: Queuine tRNA-ribosyltransferase (380 aa).

Residue aspartate 96 is the Proton acceptor of the active site. Substrate contacts are provided by residues 96–100, aspartate 150, glutamine 193, and glycine 220; that span reads DSGGF. An RNA binding region spans residues 251 to 257; that stretch reads GVGAPDS. Aspartate 270 (nucleophile) is an active-site residue. An RNA binding; important for wobble base 34 recognition region spans residues 275–279; sequence TRIAR. Zn(2+) contacts are provided by cysteine 308, cysteine 310, cysteine 313, and histidine 339.

This sequence belongs to the queuine tRNA-ribosyltransferase family. Homodimer. Within each dimer, one monomer is responsible for RNA recognition and catalysis, while the other monomer binds to the replacement base PreQ1. Requires Zn(2+) as cofactor.

It carries out the reaction 7-aminomethyl-7-carbaguanine + guanosine(34) in tRNA = 7-aminomethyl-7-carbaguanosine(34) in tRNA + guanine. The protein operates within tRNA modification; tRNA-queuosine biosynthesis. Functionally, catalyzes the base-exchange of a guanine (G) residue with the queuine precursor 7-aminomethyl-7-deazaguanine (PreQ1) at position 34 (anticodon wobble position) in tRNAs with GU(N) anticodons (tRNA-Asp, -Asn, -His and -Tyr). Catalysis occurs through a double-displacement mechanism. The nucleophile active site attacks the C1' of nucleotide 34 to detach the guanine base from the RNA, forming a covalent enzyme-RNA intermediate. The proton acceptor active site deprotonates the incoming PreQ1, allowing a nucleophilic attack on the C1' of the ribose to form the product. After dissociation, two additional enzymatic reactions on the tRNA convert PreQ1 to queuine (Q), resulting in the hypermodified nucleoside queuosine (7-(((4,5-cis-dihydroxy-2-cyclopenten-1-yl)amino)methyl)-7-deazaguanosine). The sequence is that of Queuine tRNA-ribosyltransferase from Streptococcus thermophilus (strain ATCC BAA-250 / LMG 18311).